A 527-amino-acid polypeptide reads, in one-letter code: Protein TIC 56, chloroplastic (527 aa).

A chloroplast-targeting transit peptide spans 1–48 (MSSMNFNPFQNWFEKPPNPVPSINFVSLADSFFPKSQSPNFASIGLPK). The disordered stretch occupies residues 43-67 (SIGLPKFSKKSPKPETAGTDEPGPY). Asn350 carries the post-translational modification Deamidated asparagine. Residues 491–508 (RREEELREEDLKHYSGRT) show a composition bias toward basic and acidic residues. The segment at 491 to 527 (RREEELREEDLKHYSGRTDEDEEEEEEEDDDSNSKKD) is disordered. The segment covering 509 to 521 (DEDEEEEEEEDDD) has biased composition (acidic residues).

As to quaternary structure, part of the Tic complex. Component of the 1-MD complex, composed of TIC20-I, TIC214, TIC100 and TIC56. Interacts with the translocating preproteins. Hydrolysis of ATP is essential for the formation of this complex. The 1-MD complex interacts with TIC21.

It localises to the plastid. The protein resides in the chloroplast inner membrane. Functionally, involved in protein precursor import into chloroplasts. May be part of an intermediate translocation complex acting as a protein-conducting channel at the inner envelope. This Arabidopsis thaliana (Mouse-ear cress) protein is Protein TIC 56, chloroplastic.